The following is a 189-amino-acid chain: Notch ligand osm-11 (189 aa).

An N-terminal signal peptide occupies residues 1 to 18 (MNFITVAALAIVMVLAQA).

May interact with lin-12/Notch receptor. Expressed in coelomocytes (at protein level).

Its subcellular location is the apical cell membrane. Functionally, probable secreted lin-12/Notch ligand or co-ligand involved in the mediation of Notch signaling. Involved in the lin-12/Notch pathway signaling of cell fate in vulval precursor cells (VPCs), acting redundantly with dsl-1 and lag-2. Required for normal octanol avoidance response, acting via both lin-12/Notch and glp-1/Notch signaling pathways in neurons, in concert with lag-2. Involved in regulation of sleep-like quiescence during the larval to adult transition, acting via Notch receptor activation and in parallel with EGF signaling. This chain is Notch ligand osm-11, found in Caenorhabditis elegans.